A 281-amino-acid polypeptide reads, in one-letter code: Glutamate racemase (281 aa).

Residues Asp10–Ser11 and Tyr42–Gly43 each bind substrate. Cys74 functions as the Proton donor/acceptor in the catalytic mechanism. Asn75–Thr76 contributes to the substrate binding site. Cys190 serves as the catalytic Proton donor/acceptor. Substrate is bound at residue Thr191 to His192.

Belongs to the aspartate/glutamate racemases family.

The catalysed reaction is L-glutamate = D-glutamate. It participates in cell wall biogenesis; peptidoglycan biosynthesis. In terms of biological role, provides the (R)-glutamate required for cell wall biosynthesis. This Oenococcus oeni (strain ATCC BAA-331 / PSU-1) protein is Glutamate racemase.